The following is a 603-amino-acid chain: Protein US26 (603 aa).

The span at 496–513 shows a compositional bias: acidic residues; that stretch reads EEEDQEEDDTSDDDDQEK. 2 disordered regions span residues 496–536 and 549–568; these read EEED…GSLE and AVAEQDRKKTQKKHKIDTAQ. Residues 517–533 show a composition bias toward polar residues; it reads NPQNNIGSLTRTPSSPG.

This sequence belongs to the herpesviridae US22 family.

The polypeptide is Protein US26 (US26) (Human cytomegalovirus (strain Merlin) (HHV-5)).